The following is an 87-amino-acid chain: Putative autophagy-related protein 8E (87 aa).

A compositionally biased stretch (basic and acidic residues) spans 1 to 14 (MEERRKEKGKEGRR). The interval 1–30 (MEERRKEKGKEGRRGKATGHSVDKFSRSNL) is disordered. The Phosphatidylethanolamine amidated glycine moiety is linked to residue G87.

Belongs to the ATG8 family. Interacts with ATG4. In terms of processing, the C-terminal Gly is amidated with phosphatidylethanolamine by an activating system similar to that for ubiquitin.

The protein localises to the cytoplasmic vesicle. The protein resides in the autophagosome membrane. It is found in the vacuole membrane. It localises to the cytoplasm. Its subcellular location is the cytoskeleton. In terms of biological role, ubiquitin-like modifier involved in autophagosomes formation. May mediate the delivery of the autophagosomes to the vacuole via the microtubule cytoskeleton. The protein is Putative autophagy-related protein 8E (ATG8E) of Oryza sativa subsp. japonica (Rice).